The primary structure comprises 532 residues: Glucose-6-phosphate isomerase (532 aa).

The active-site Proton donor is the E322. Catalysis depends on residues H351 and K457.

It belongs to the GPI family.

The protein resides in the cytoplasm. The catalysed reaction is alpha-D-glucose 6-phosphate = beta-D-fructose 6-phosphate. It functions in the pathway carbohydrate biosynthesis; gluconeogenesis. The protein operates within carbohydrate degradation; glycolysis; D-glyceraldehyde 3-phosphate and glycerone phosphate from D-glucose: step 2/4. Catalyzes the reversible isomerization of glucose-6-phosphate to fructose-6-phosphate. In Synechococcus sp. (strain JA-2-3B'a(2-13)) (Cyanobacteria bacterium Yellowstone B-Prime), this protein is Glucose-6-phosphate isomerase.